A 420-amino-acid polypeptide reads, in one-letter code: D-tagatose-1,6-bisphosphate aldolase subunit GatZ (420 aa).

This sequence belongs to the GatZ/KbaZ family. GatZ subfamily. In terms of assembly, forms a complex with GatY.

Its pathway is carbohydrate metabolism; D-tagatose 6-phosphate degradation; D-glyceraldehyde 3-phosphate and glycerone phosphate from D-tagatose 6-phosphate: step 2/2. In terms of biological role, component of the tagatose-1,6-bisphosphate aldolase GatYZ that is required for full activity and stability of the Y subunit. Could have a chaperone-like function for the proper and stable folding of GatY. When expressed alone, GatZ does not show any aldolase activity. Is involved in the catabolism of galactitol. This is D-tagatose-1,6-bisphosphate aldolase subunit GatZ from Escherichia coli O7:K1 (strain IAI39 / ExPEC).